A 418-amino-acid polypeptide reads, in one-letter code: Serine hydroxymethyltransferase (418 aa).

(6S)-5,6,7,8-tetrahydrofolate-binding positions include L121 and 125 to 127; that span reads GHL. An N6-(pyridoxal phosphate)lysine modification is found at K230. 356–358 provides a ligand contact to (6S)-5,6,7,8-tetrahydrofolate; that stretch reads SPF.

Belongs to the SHMT family. As to quaternary structure, homodimer. Pyridoxal 5'-phosphate serves as cofactor.

The protein localises to the cytoplasm. It carries out the reaction (6R)-5,10-methylene-5,6,7,8-tetrahydrofolate + glycine + H2O = (6S)-5,6,7,8-tetrahydrofolate + L-serine. Its pathway is one-carbon metabolism; tetrahydrofolate interconversion. It functions in the pathway amino-acid biosynthesis; glycine biosynthesis; glycine from L-serine: step 1/1. Catalyzes the reversible interconversion of serine and glycine with tetrahydrofolate (THF) serving as the one-carbon carrier. This reaction serves as the major source of one-carbon groups required for the biosynthesis of purines, thymidylate, methionine, and other important biomolecules. Also exhibits THF-independent aldolase activity toward beta-hydroxyamino acids, producing glycine and aldehydes, via a retro-aldol mechanism. In Shewanella halifaxensis (strain HAW-EB4), this protein is Serine hydroxymethyltransferase.